The sequence spans 1550 residues: Cellulose synthase 1 (1550 aa).

Positions 1-741 (MPEVRSSTQS…KERVLKGTVK (741 aa)) are catalytic. Transmembrane regions (helical) follow at residues 26 to 46 (GAGL…TSVT), 47 to 67 (LPPE…FIVG), and 106 to 126 (GLLG…LFLS). The segment at 147–240 (EWPTVDIFVP…YILIFDCDHV (94 aa)) is catalytic subdomain A. Asp189 is a catalytic residue. Residues Asp236 and Asp238 each coordinate substrate. The catalytic subdomain B stretch occupies residues 317–377 (TAIEQIGGFA…GQRVRWARGM (61 aa)). Asp333 is a catalytic residue. Helical transmembrane passes span 398 to 418 (LCYL…IFLS), 423 to 443 (FLFF…AYAI), 468 to 488 (VYET…LLSP), 507 to 527 (FDLG…GGLA), and 547 to 567 (LLNS…IAVG). The PilZ domain occupies 572 to 647 (QKRNSHRIPA…PARIIRAGNG (76 aa)). 2 disordered regions span residues 711–734 (SSPT…RKER) and 768–813 (APAH…QPLA). The tract at residues 742–1550 (MVSLLALLTF…KQLEDERRKS (809 aa)) is cyclic di-GMP binding domain. The segment covering 768-796 (APAHQPEASDLPPLPALLPATSGAAQAGA) has biased composition (low complexity). A helical transmembrane segment spans residues 1513–1533 (VLLVGLLGCILIVSVLARALA).

In the N-terminal section; belongs to the glycosyltransferase 2 family. It in the C-terminal section; belongs to the AcsB/BcsB family. It depends on Mg(2+) as a cofactor.

Its subcellular location is the cell inner membrane. It carries out the reaction [(1-&gt;4)-beta-D-glucosyl](n) + UDP-alpha-D-glucose = [(1-&gt;4)-beta-D-glucosyl](n+1) + UDP + H(+). Its pathway is glycan metabolism; bacterial cellulose biosynthesis. Its activity is regulated as follows. Activated by c-di-GMP. In terms of biological role, bifunctional protein comprised of a catalytic subunit and a regulatory subunit. The catalytic subunit of cellulose synthase polymerizes uridine 5'-diphosphate glucose to cellulose in a processive way. The thick cellulosic mats generated by this enzyme probably provide a specialized protective environment to the bacterium. The regulatory subunit binds bis-(3'-5') cyclic diguanylic acid (c-di-GMP). The sequence is that of Cellulose synthase 1 (acsAB) from Komagataeibacter xylinus (Gluconacetobacter xylinus).